The primary structure comprises 194 residues: uncharacterized protein (194 aa).

A disordered region spans residues 25–156 (PSWACRRGGP…ESPLGTLPCS (132 aa)). Positions 43–57 (GPSTVPVTPTAGSCQ) are enriched in polar residues. A compositionally biased stretch (low complexity) spans 104 to 113 (SSSPGPSFHL).

This is an uncharacterized protein from Homo sapiens (Human).